An 89-amino-acid polypeptide reads, in one-letter code: Small ribosomal subunit protein uS15 (89 aa).

This sequence belongs to the universal ribosomal protein uS15 family. In terms of assembly, part of the 30S ribosomal subunit. Forms a bridge to the 50S subunit in the 70S ribosome, contacting the 23S rRNA.

Functionally, one of the primary rRNA binding proteins, it binds directly to 16S rRNA where it helps nucleate assembly of the platform of the 30S subunit by binding and bridging several RNA helices of the 16S rRNA. Forms an intersubunit bridge (bridge B4) with the 23S rRNA of the 50S subunit in the ribosome. This chain is Small ribosomal subunit protein uS15, found in Listeria innocua serovar 6a (strain ATCC BAA-680 / CLIP 11262).